Here is a 266-residue protein sequence, read N- to C-terminus: Putative carbamate hydrolase RutD (266 aa).

This sequence belongs to the AB hydrolase superfamily. Hydrolase RutD family.

It carries out the reaction carbamate + 2 H(+) = NH4(+) + CO2. Functionally, involved in pyrimidine catabolism. May facilitate the hydrolysis of carbamate, a reaction that can also occur spontaneously. The protein is Putative carbamate hydrolase RutD of Escherichia coli (strain B / BL21-DE3).